The sequence spans 92 residues: Small ribosomal subunit protein bS20 (92 aa).

The segment at 1–23 (MANTPSAKKRAKQAEKRRSHNAS) is disordered. The span at 7–20 (AKKRAKQAEKRRSH) shows a compositional bias: basic residues.

This sequence belongs to the bacterial ribosomal protein bS20 family.

Binds directly to 16S ribosomal RNA. This Pseudomonas fluorescens (strain SBW25) protein is Small ribosomal subunit protein bS20.